Here is a 128-residue protein sequence, read N- to C-terminus: Sulfurtransferase TusD (128 aa).

Cys-78 (cysteine persulfide intermediate) is an active-site residue.

Belongs to the DsrE/TusD family. As to quaternary structure, heterohexamer, formed by a dimer of trimers. The hexameric TusBCD complex contains 2 copies each of TusB, TusC and TusD. The TusBCD complex interacts with TusE.

The protein localises to the cytoplasm. Functionally, part of a sulfur-relay system required for 2-thiolation of 5-methylaminomethyl-2-thiouridine (mnm(5)s(2)U) at tRNA wobble positions. Accepts sulfur from TusA and transfers it in turn to TusE. The protein is Sulfurtransferase TusD of Citrobacter koseri (strain ATCC BAA-895 / CDC 4225-83 / SGSC4696).